We begin with the raw amino-acid sequence, 248 residues long: ATP synthase subunit a (248 aa).

5 consecutive transmembrane segments (helical) span residues 31 to 51 (GQVL…VLLG), 90 to 110 (VPYV…GNLF), 129 to 149 (INTT…AGIS), 195 to 215 (VIAV…MILF), and 216 to 236 (LFTG…YIGE).

It belongs to the ATPase A chain family. As to quaternary structure, F-type ATPases have 2 components, CF(1) - the catalytic core - and CF(0) - the membrane proton channel. CF(1) has five subunits: alpha(3), beta(3), gamma(1), delta(1), epsilon(1). CF(0) has four main subunits: a, b, b' and c.

Its subcellular location is the cellular thylakoid membrane. In terms of biological role, key component of the proton channel; it plays a direct role in the translocation of protons across the membrane. This Synechococcus sp. (strain JA-3-3Ab) (Cyanobacteria bacterium Yellowstone A-Prime) protein is ATP synthase subunit a.